The chain runs to 172 residues: Peptide deformylase-like (172 aa).

Residue E134 is part of the active site.

Belongs to the polypeptide deformylase family.

This chain is Peptide deformylase-like, found in Rhizobium meliloti (strain 1021) (Ensifer meliloti).